The following is a 448-amino-acid chain: Cysteine--tRNA ligase (448 aa).

Residue Cys29 coordinates Zn(2+). Residues 31–41 (PTVYNYIHIGN) carry the 'HIGH' region motif. Residues Cys212, His237, and Glu241 each coordinate Zn(2+). The short motif at 269–273 (KMSKS) is the 'KMSKS' region element. An ATP-binding site is contributed by Lys272.

This sequence belongs to the class-I aminoacyl-tRNA synthetase family. In terms of assembly, monomer. Zn(2+) serves as cofactor.

It is found in the cytoplasm. The catalysed reaction is tRNA(Cys) + L-cysteine + ATP = L-cysteinyl-tRNA(Cys) + AMP + diphosphate. In Streptococcus equi subsp. zooepidemicus (strain MGCS10565), this protein is Cysteine--tRNA ligase.